The following is a 544-amino-acid chain: Cytochrome P450 monooxygenase cle2 (544 aa).

Residues 19–39 form a helical membrane-spanning segment; it reads LGLLIGLSLILSITWTAYTIL. A disordered region spans residues 273–305; it reads RTQQVEQSIEKNTKNEKKEDEDEDQNEDEETPG. The span at 280–290 shows a compositional bias: basic and acidic residues; sequence SIEKNTKNEKK. A compositionally biased stretch (acidic residues) spans 291–304; the sequence is EDEDEDQNEDEETP. Cys478 contributes to the heme binding site.

Belongs to the cytochrome P450 family. The cofactor is heme.

The protein resides in the membrane. It participates in secondary metabolite biosynthesis; terpenoid biosynthesis. Its function is as follows. Cytochrome P450 monooxygenase; part of the cluster A that mediates the biosynthesis of chevalone E and its oxidized derivatives that possess a unique five-membered lactone ring and can synergistically enhance the cytotoxicity of doxorubicin (DOX) in breast cancer cells. Within the pathway, cle2 is involved in hydroxylation of the chavalone E scaffold at position C-20 and contributes with cle4 to the production of seven oxidation derivatives. The molecular scaffold is commonly biosynthesized by a series of enzymes including the non-reducing polyketide synthase (NR-PKS) cle1 that produces the alpha-pyrone triacetic acid lactone (TAL); The membrane-bound prenyltransferase cle5 that accepts TAL as its substrate to perform a C-3 geranylgeranylation reaction, in which the pathway-dedicated GGPS cle6 is required to provide GGPP, the other substrate of cle5; the FAD-dependent monooxygenase Cle3 that forms an (S)-epoxide ring at the terminal olefin of the geranylgeranyl group; and the terpene cyclase Cle7 that catalyzes the cyclization of the prenyl group that yields the pentacyclic pathway intermediate chevalone E. Chevalone E can derivatize into seven new oxidized analogs by the cytochrome P450 monooxygenases cle2 (acting at C-20) and cle4 (acting at C-11 and C-12). This chain is Cytochrome P450 monooxygenase cle2, found in Aspergillus versicolor.